Consider the following 700-residue polypeptide: ATP-dependent zinc metalloprotease FtsH (700 aa).

Topologically, residues 1–20 (MSSDNGSGRQGGDRGGSTGY) are cytoplasmic. A helical transmembrane segment spans residues 21-41 (NLLMYLGFGAIIATLVALYVL). Topologically, residues 42–171 (QMFQTSLDYT…FRHADPPGPW (130 aa)) are periplasmic. Residues 172–192 (EQHSQLIIGMLLAAMLIYIVV) traverse the membrane as a helical segment. Residues 193–700 (RRLSAAGSPM…ITAPATERSG (508 aa)) lie on the Cytoplasmic side of the membrane. 262–269 (GPPGTGKT) lines the ATP pocket. H484 contacts Zn(2+). The active site involves E485. H488 and D561 together coordinate Zn(2+).

In the central section; belongs to the AAA ATPase family. This sequence in the C-terminal section; belongs to the peptidase M41 family. As to quaternary structure, homohexamer. It depends on Zn(2+) as a cofactor.

Its subcellular location is the cell inner membrane. Acts as a processive, ATP-dependent zinc metallopeptidase for both cytoplasmic and membrane proteins. Plays a role in the quality control of integral membrane proteins. This chain is ATP-dependent zinc metalloprotease FtsH, found in Pirellula staleyi (strain ATCC 27377 / DSM 6068 / ICPB 4128) (Pirella staleyi).